The following is a 286-amino-acid chain: tRNA(Ile)-lysidine synthase (286 aa).

7–12 (SGGPDS) contributes to the ATP binding site.

The protein belongs to the tRNA(Ile)-lysidine synthase family.

Its subcellular location is the cytoplasm. It catalyses the reaction cytidine(34) in tRNA(Ile2) + L-lysine + ATP = lysidine(34) in tRNA(Ile2) + AMP + diphosphate + H(+). Ligates lysine onto the cytidine present at position 34 of the AUA codon-specific tRNA(Ile) that contains the anticodon CAU, in an ATP-dependent manner. Cytidine is converted to lysidine, thus changing the amino acid specificity of the tRNA from methionine to isoleucine. The protein is tRNA(Ile)-lysidine synthase of Mycoplasmopsis pulmonis (strain UAB CTIP) (Mycoplasma pulmonis).